A 313-amino-acid polypeptide reads, in one-letter code: Porphobilinogen deaminase (313 aa).

Cys-242 is modified (S-(dipyrrolylmethanemethyl)cysteine).

This sequence belongs to the HMBS family. As to quaternary structure, monomer. Dipyrromethane serves as cofactor.

The enzyme catalyses 4 porphobilinogen + H2O = hydroxymethylbilane + 4 NH4(+). The protein operates within porphyrin-containing compound metabolism; protoporphyrin-IX biosynthesis; coproporphyrinogen-III from 5-aminolevulinate: step 2/4. Its function is as follows. Tetrapolymerization of the monopyrrole PBG into the hydroxymethylbilane pre-uroporphyrinogen in several discrete steps. This is Porphobilinogen deaminase from Pseudomonas aeruginosa (strain LESB58).